The following is a 592-amino-acid chain: Insulin-like growth factor 2 mRNA-binding protein 2 (592 aa).

2 consecutive RRM domains span residues 3-76 and 82-157; these read NKLY…YSVS and RRIQ…YIPD. S11 carries the post-translational modification Phosphoserine. The segment at 157 to 182 is disordered; it reads DEEVSSPSPPHRAREQGHGPGSSSQA. Phosphoserine occurs at positions 162 and 164. 4 consecutive KH domains span residues 186–251, 267–334, 420–485, and 502–568; these read DFPL…CRMI, EVPL…EIEI, QETV…QGRI, and KLEA…QRKI. At T543 the chain carries Phosphothreonine.

Belongs to the RRM IMP/VICKZ family. In terms of assembly, can form homooligomers and heterooligomers with IGF2BP1 and IGF2BP3 in an RNA-dependent manner. Interacts with HNRPD. Interacts with IGF2BP1. Interacts with ELAVL1, DHX9, HNRNPU, MATR3 and PABPC1. In terms of tissue distribution, expressed in oocytes, granulosa cells of small and growing follicles and Leydig cells of the testis (at protein level). Expressed in testis and ovary.

The protein localises to the nucleus. It is found in the cytoplasm. It localises to the P-body. The protein resides in the stress granule. Functionally, RNA-binding factor that recruits target transcripts to cytoplasmic protein-RNA complexes (mRNPs). This transcript 'caging' into mRNPs allows mRNA transport and transient storage. It also modulates the rate and location at which target transcripts encounter the translational apparatus and shields them from endonuclease attacks or microRNA-mediated degradation. Preferentially binds to N6-methyladenosine (m6A)-containing mRNAs and increases their stability. Binds to the 5'-UTR of the insulin-like growth factor 2 (IGF2) mRNAs. Binding is isoform-specific. Binds to beta-actin/ACTB and MYC transcripts. Increases MYC mRNA stability by binding to the coding region instability determinant (CRD) and binding is enhanced by m6A-modification of the CRD. The chain is Insulin-like growth factor 2 mRNA-binding protein 2 (Igf2bp2) from Mus musculus (Mouse).